The sequence spans 331 residues: Ferredoxin--NADP reductase (331 aa).

8 residues coordinate FAD: Thr-20, Glu-39, Gln-47, Tyr-52, Val-92, Phe-126, Asp-287, and Ser-328.

The protein belongs to the ferredoxin--NADP reductase type 2 family. Homodimer. FAD serves as cofactor.

It catalyses the reaction 2 reduced [2Fe-2S]-[ferredoxin] + NADP(+) + H(+) = 2 oxidized [2Fe-2S]-[ferredoxin] + NADPH. In Bacillus cereus (strain ZK / E33L), this protein is Ferredoxin--NADP reductase.